Reading from the N-terminus, the 338-residue chain is MSLPVLQGTGFQFRRILSFFPQDISLAFTYGSGVFRQAGSSHNDVRNKMLDFVFAVDDPVTWHTMNIIQNRSHYSFLKFLGPKHITAVQNNYGAGVYYNTLVPCDGRLIKYGVVSTETLLQDLLHWRTLYIAGRLHKPVKILTQRDDGRLKSALTSNLKSALNAAFLMLPESFSEEELYLQIAGLSYAGDFRMIIGEDKDKVLNIVKPNVPHFQKLYAAILLDCPLAVYKAQQGRVEVDKSPEGQYQQLMALPKKLQQNITALVDPPGKNRDVEEILLQVAQDPDCSSVIQQALYGIVRSSSLSQSAKGIVTAGVKKSVQYSSKKLYKMLRSLRRGKS.

It belongs to the TAM41 family. It depends on Mg(2+) as a cofactor.

The protein resides in the mitochondrion inner membrane. The enzyme catalyses a 1,2-diacyl-sn-glycero-3-phosphate + CTP + H(+) = a CDP-1,2-diacyl-sn-glycerol + diphosphate. The protein operates within phospholipid metabolism; CDP-diacylglycerol biosynthesis; CDP-diacylglycerol from sn-glycerol 3-phosphate: step 3/3. In terms of biological role, catalyzes the conversion of phosphatidic acid (PA) to CDP-diacylglycerol (CDP-DAG), an essential intermediate in the synthesis of phosphatidylglycerol, cardiolipin and phosphatidylinositol. This chain is Phosphatidate cytidylyltransferase, mitochondrial (tamm41), found in Xenopus laevis (African clawed frog).